The primary structure comprises 883 residues: Histidine--tRNA ligase, cytoplasmic (883 aa).

This sequence belongs to the class-II aminoacyl-tRNA synthetase family.

Its subcellular location is the cytoplasm. It localises to the cytosol. The catalysed reaction is tRNA(His) + L-histidine + ATP = L-histidyl-tRNA(His) + AMP + diphosphate + H(+). In Arabidopsis thaliana (Mouse-ear cress), this protein is Histidine--tRNA ligase, cytoplasmic.